Consider the following 131-residue polypeptide: D-ribose pyranase (131 aa).

Catalysis depends on His20, which acts as the Proton donor. Residues Asp28, His98, and 120-122 (YAN) each bind substrate.

This sequence belongs to the RbsD / FucU family. RbsD subfamily. Homodecamer.

Its subcellular location is the cytoplasm. The catalysed reaction is beta-D-ribopyranose = beta-D-ribofuranose. It participates in carbohydrate metabolism; D-ribose degradation; D-ribose 5-phosphate from beta-D-ribopyranose: step 1/2. Its function is as follows. Catalyzes the interconversion of beta-pyran and beta-furan forms of D-ribose. The chain is D-ribose pyranase from Bacillus cereus (strain B4264).